Consider the following 120-residue polypeptide: Large ribosomal subunit protein uL18 (120 aa).

The interval 1-22 (MKVDRKTATHRRHQRIRRKIAG) is disordered. The span at 8–20 (ATHRRHQRIRRKI) shows a compositional bias: basic residues.

The protein belongs to the universal ribosomal protein uL18 family. In terms of assembly, part of the 50S ribosomal subunit; part of the 5S rRNA/L5/L18/L25 subcomplex. Contacts the 5S and 23S rRNAs.

In terms of biological role, this is one of the proteins that bind and probably mediate the attachment of the 5S RNA into the large ribosomal subunit, where it forms part of the central protuberance. The chain is Large ribosomal subunit protein uL18 from Gloeobacter violaceus (strain ATCC 29082 / PCC 7421).